Consider the following 107-residue polypeptide: Cysteine proteinase inhibitor (107 aa).

The Cystatin domain maps to glycine 18–alanine 107. The Secondary area of contact signature appears at glutamine 63–glycine 67.

The protein belongs to the cystatin family. Phytocystatin subfamily. Expressed in embryos, developing endosperms, leaves, roots, flowers and pollen grains.

Inhibits papain, ficin, cathepsin B and, to a lesser extent, chymopapain, but is inactive against bromelain. Inhibits the growth of pathogenic fungi. Regulated by the DOF transcription factors SAD (activator) and BPBF (repressor). The chain is Cysteine proteinase inhibitor (ICY) from Hordeum vulgare (Barley).